A 656-amino-acid polypeptide reads, in one-letter code: Chaperone protein DnaK (656 aa).

A Phosphothreonine; by autocatalysis modification is found at T204. Positions 602-656 are disordered; sequence KLAERVYAKKGGAAGAPPGGEAEGEPQAQAGGKKEDVVDAEFEEVKDEKKKDEDK. Residues 620-632 are compositionally biased toward low complexity; it reads GGEAEGEPQAQAG. The span at 647 to 656 shows a compositional bias: basic and acidic residues; it reads KDEKKKDEDK.

The protein belongs to the heat shock protein 70 family.

Acts as a chaperone. The protein is Chaperone protein DnaK of Coxiella burnetii (strain CbuG_Q212) (Coxiella burnetii (strain Q212)).